A 62-amino-acid polypeptide reads, in one-letter code: MIQISNLILAADVSPEVAGSSGFNMIASFFAAALLIVIPAAAFLIFVSQKDSLERTSATRRR.

The helical transmembrane segment at Ile26 to Phe46 threads the bilayer.

It belongs to the PsbX family. Type 2 subfamily. PSII consists of a core antenna complex that captures photons, and an electron transfer chain that converts photonic excitation into a charge separation. PSII forms dimeric complexes.

The protein localises to the cellular thylakoid membrane. In terms of biological role, involved in the binding and/or turnover of quinones at the Q(B) site of Photosystem II. This chain is Photosystem II reaction center X protein, found in Prochlorococcus marinus subsp. pastoris (strain CCMP1986 / NIES-2087 / MED4).